A 145-amino-acid chain; its full sequence is RxLR effector protein BLR40 (145 aa).

The N-terminal stretch at 1–22 is a signal peptide; sequence MLLSRAISVVALLACICCGVHT. The RxLR-dEER motif lies at 44–58; the sequence is RRLRTSVDLVDNEER.

This sequence belongs to the RxLR effector family.

It is found in the secreted. The protein resides in the host cell membrane. Secreted effector that triggers a robust hypersensitive response (HR) in Lactuca sativa cv. Design that is resistant to multiple B.lactucae races, including Bl:24. This is RxLR effector protein BLR40 from Bremia lactucae (Lettuce downy mildew).